Consider the following 673-residue polypeptide: Putative lipase atg15 (673 aa).

At 1-7 (MPRKRSR) the chain is on the cytoplasmic side. Residues 8–28 (FELSIHSLLLSVAVLSGAAYA) form a helical; Signal-anchor for type II membrane protein membrane-spanning segment. The Lumenal portion of the chain corresponds to 29 to 673 (SGYYPPSQQV…AVTSAPTPTS (645 aa)). 5 N-linked (GlcNAc...) asparagine glycosylation sites follow: Asn156, Asn191, Asn213, Asn271, and Asn295. Ser311 serves as the catalytic Charge relay system. Asn457 carries N-linked (GlcNAc...) asparagine glycosylation.

Belongs to the AB hydrolase superfamily. Lipase family. Binds to both phosphatidylinositol (PI) and phosphatidylinositol 3,5-bisphosphate (PIP2).

The protein localises to the endosome. Its subcellular location is the multivesicular body membrane. It localises to the prevacuolar compartment membrane. It carries out the reaction a triacylglycerol + H2O = a diacylglycerol + a fatty acid + H(+). Its function is as follows. Lipase which is essential for lysis of subvacuolar cytoplasm to vacuole targeted bodies and intravacuolar autophagic bodies. Involved in the lysis of intravacuolar multivesicular body (MVB) vesicles. The intravacuolar membrane disintegration by atg15 is critical to life span extension. This Penicillium rubens (strain ATCC 28089 / DSM 1075 / NRRL 1951 / Wisconsin 54-1255) (Penicillium chrysogenum) protein is Putative lipase atg15 (atg15).